The following is a 126-amino-acid chain: UPF0102 protein BH12350 (126 aa).

The protein belongs to the UPF0102 family.

This is UPF0102 protein BH12350 from Bartonella henselae (strain ATCC 49882 / DSM 28221 / CCUG 30454 / Houston 1) (Rochalimaea henselae).